Consider the following 411-residue polypeptide: G1/S-specific cyclin pas1 (411 aa).

2 disordered regions span residues 210–253 and 307–326; these read LKNQ…PSVL and SLSKPVSLPPTPSSPKVGVY. Residues 218 to 252 are compositionally biased toward low complexity; it reads PSSSPQTTQDSSPILTMAPSTPVSVGSTPPSTPSV.

It belongs to the cyclin family.

Essential for the control of the cell cycle at the G1/S (start) transition. Interacts with the pef1 protein kinase. The pef1/pas1 complex activates the res2/cdc10 complex. The sequence is that of G1/S-specific cyclin pas1 (pas1) from Schizosaccharomyces pombe (strain 972 / ATCC 24843) (Fission yeast).